The primary structure comprises 901 residues: Protein translocase subunit SecA (901 aa).

Residues glutamine 87, 105-109 (GEGKT), and aspartate 512 contribute to the ATP site. 4 residues coordinate Zn(2+): cysteine 885, cysteine 887, cysteine 896, and histidine 897.

The protein belongs to the SecA family. As to quaternary structure, monomer and homodimer. Part of the essential Sec protein translocation apparatus which comprises SecA, SecYEG and auxiliary proteins SecDF-YajC and YidC. Requires Zn(2+) as cofactor.

Its subcellular location is the cell inner membrane. It is found in the cytoplasm. It carries out the reaction ATP + H2O + cellular proteinSide 1 = ADP + phosphate + cellular proteinSide 2.. Its function is as follows. Part of the Sec protein translocase complex. Interacts with the SecYEG preprotein conducting channel. Has a central role in coupling the hydrolysis of ATP to the transfer of proteins into and across the cell membrane, serving both as a receptor for the preprotein-SecB complex and as an ATP-driven molecular motor driving the stepwise translocation of polypeptide chains across the membrane. In Salmonella paratyphi B (strain ATCC BAA-1250 / SPB7), this protein is Protein translocase subunit SecA.